The sequence spans 123 residues: Large ribosomal subunit protein bL17 (123 aa).

Belongs to the bacterial ribosomal protein bL17 family. In terms of assembly, part of the 50S ribosomal subunit. Contacts protein L32.

The protein is Large ribosomal subunit protein bL17 of Exiguobacterium sibiricum (strain DSM 17290 / CCUG 55495 / CIP 109462 / JCM 13490 / 255-15).